Reading from the N-terminus, the 126-residue chain is Aspartate 1-decarboxylase (126 aa).

The active-site Schiff-base intermediate with substrate; via pyruvic acid is S25. S25 carries the post-translational modification Pyruvic acid (Ser). Substrate is bound at residue T57. The Proton donor role is filled by Y58. Residue 73–75 (GAA) participates in substrate binding.

This sequence belongs to the PanD family. Heterooctamer of four alpha and four beta subunits. Pyruvate is required as a cofactor. Is synthesized initially as an inactive proenzyme, which is activated by self-cleavage at a specific serine bond to produce a beta-subunit with a hydroxyl group at its C-terminus and an alpha-subunit with a pyruvoyl group at its N-terminus.

It localises to the cytoplasm. It carries out the reaction L-aspartate + H(+) = beta-alanine + CO2. Its pathway is cofactor biosynthesis; (R)-pantothenate biosynthesis; beta-alanine from L-aspartate: step 1/1. Functionally, catalyzes the pyruvoyl-dependent decarboxylation of aspartate to produce beta-alanine. In Sodalis glossinidius (strain morsitans), this protein is Aspartate 1-decarboxylase.